The chain runs to 666 residues: UvrABC system protein B (666 aa).

Positions 26 to 183 constitute a Helicase ATP-binding domain; it reads DSFQKGAEKV…RKLLHIQYNR (158 aa). Residue 39-46 coordinates ATP; that stretch reads GVTGSGKT. A Beta-hairpin motif is present at residues 92 to 115; sequence YYDYYQPEAYVPSSDTFIEKDSSI. The Helicase C-terminal domain maps to 429–591; sequence QIEDLLVEIR…ITPLTIRKEV (163 aa). In terms of domain architecture, UVR spans 625–660; it reads EVLKDKLREEMMKAAKELDFERAAILRDKMLSIQIN.

It belongs to the UvrB family. Forms a heterotetramer with UvrA during the search for lesions. Interacts with UvrC in an incision complex.

Its subcellular location is the cytoplasm. Functionally, the UvrABC repair system catalyzes the recognition and processing of DNA lesions. A damage recognition complex composed of 2 UvrA and 2 UvrB subunits scans DNA for abnormalities. Upon binding of the UvrA(2)B(2) complex to a putative damaged site, the DNA wraps around one UvrB monomer. DNA wrap is dependent on ATP binding by UvrB and probably causes local melting of the DNA helix, facilitating insertion of UvrB beta-hairpin between the DNA strands. Then UvrB probes one DNA strand for the presence of a lesion. If a lesion is found the UvrA subunits dissociate and the UvrB-DNA preincision complex is formed. This complex is subsequently bound by UvrC and the second UvrB is released. If no lesion is found, the DNA wraps around the other UvrB subunit that will check the other stand for damage. This is UvrABC system protein B from Leptospira borgpetersenii serovar Hardjo-bovis (strain JB197).